The chain runs to 50 residues: Large ribosomal subunit protein bL36B (50 aa).

This sequence belongs to the bacterial ribosomal protein bL36 family.

In Pseudomonas aeruginosa (strain UCBPP-PA14), this protein is Large ribosomal subunit protein bL36B.